Consider the following 427-residue polypeptide: MYSRKSLSLISKCGQLSRLNAQAALQARRHLSIHEYRSAQLLREYGIGTPEGFPAFTPEEAFEAAKKLNTNKLVIKAQALTGGRGKGHFDTGYKSGVHMIESPQQAEDVAKEMLNHNLITKQTGIAGKPVSAVYIVKRVDTKHEAYLSILMDRQTKKPMIIASSQGGMNIEEVAERTPDAIKKFSIETSKGLSPQMAKDVAKSLGFSPDAQDEAAKAVSNLYKIFMERDATQVEINPLSEIEHDPTHKIMCTDAKFGFDDNASFRQEKIYSWRDLSQEDPDEVKAKKYDLNFVKLKGNIGCLVNGAGLAMATMDVIKLNGGDPANFLDCGGGATPETIKQGFELILSNKNVDAIFVNIFGGIVRCDYVALGLVEAARELEVRVPIVARLQGTKVEEGRDIINKSGVKIYSFDELDPAAKKVVELTQN.

Residues 1-30 (MYSRKSLSLISKCGQLSRLNAQAALQARRH) constitute a mitochondrion transit peptide. The ATP-grasp domain maps to 39–284 (AQLLREYGIG…LSQEDPDEVK (246 aa)). ATP-binding positions include Lys76 and 83 to 85 (GRG). Ser102 is modified (phosphoserine). Glu144 is a binding site for ATP. Mg(2+) contacts are provided by Asn236 and Asp253. Phosphoserine is present on residues Ser263 and Ser276. Substrate is bound by residues Asn304 and 361 to 363 (GIV).

It belongs to the succinate/malate CoA ligase beta subunit family. As to quaternary structure, heterodimer of an alpha and a beta subunit. Requires Mg(2+) as cofactor.

Its subcellular location is the mitochondrion. The catalysed reaction is succinate + ATP + CoA = succinyl-CoA + ADP + phosphate. It participates in carbohydrate metabolism; tricarboxylic acid cycle; succinate from succinyl-CoA (ligase route): step 1/1. Its function is as follows. Succinyl-CoA synthetase functions in the citric acid cycle (TCA), coupling the hydrolysis of succinyl-CoA to the synthesis of ATP and thus represents the only step of substrate-level phosphorylation in the TCA. The beta subunit provides nucleotide specificity of the enzyme and binds the substrate succinate, while the binding sites for coenzyme A and phosphate are found in the alpha subunit. The polypeptide is Succinate--CoA ligase [ADP-forming] subunit beta, mitochondrial (Saccharomyces cerevisiae (strain ATCC 204508 / S288c) (Baker's yeast)).